We begin with the raw amino-acid sequence, 320 residues long: Protein MRG1 (320 aa).

The interval 1–28 (MGSSSKEETASDGDTASGGASPSNDGRL) is disordered. Positions 12 to 24 (DGDTASGGASPSN) are enriched in polar residues. Positions 30-80 (SEGERVLAYHGPRVYGAKVQKVELRKKEWKYFVHYLGWNKNWDEWVSADRL) constitute a Tudor-knot domain. Basic and acidic residues predominate over residues 93 to 104 (ALDKKQGVEKGT). Residues 93–147 (ALDKKQGVEKGTKSGRSAQTKTRSSADTKADKDDTKTNAAKGKKRKHESGNEKDN) are disordered. The span at 106-115 (SGRSAQTKTR) shows a compositional bias: polar residues. Residues 116 to 128 (SSADTKADKDDTK) show a composition bias toward basic and acidic residues. In terms of domain architecture, MRG spans 150-318 (AEKLMKIQIP…KVSDGKGKGK (169 aa)).

As to quaternary structure, interacts with HAM1 and HAM2. Interacts (via MRG domain) with CO. Component of the NuA4 histone acetyltransferase complex. Ubiquitous. Mainly expressed in the vasculature of cotyledons and leaves, and in roots and inflorescences.

Its subcellular location is the nucleus. In terms of biological role, chromatin remodeling factor. Acts as a 'reader' protein by binding to H3K36me3 and H3K36me3 to control histone H4 acetylation. Increases the transcriptional levels of the flowering time genes FLC and FT. Binds the chromatin at the FT promoter upon interaction with CO. In Arabidopsis thaliana (Mouse-ear cress), this protein is Protein MRG1.